The primary structure comprises 375 residues: 23S rRNA (uracil(747)-C(5))-methyltransferase RlmC (375 aa).

Cys3, Cys11, Cys14, and Cys87 together coordinate [4Fe-4S] cluster. S-adenosyl-L-methionine contacts are provided by Gln212, Phe241, Glu262, and Asn307. The Nucleophile role is filled by Cys334.

It belongs to the class I-like SAM-binding methyltransferase superfamily. RNA M5U methyltransferase family. RlmC subfamily.

The enzyme catalyses uridine(747) in 23S rRNA + S-adenosyl-L-methionine = 5-methyluridine(747) in 23S rRNA + S-adenosyl-L-homocysteine + H(+). In terms of biological role, catalyzes the formation of 5-methyl-uridine at position 747 (m5U747) in 23S rRNA. The chain is 23S rRNA (uracil(747)-C(5))-methyltransferase RlmC from Escherichia coli O7:K1 (strain IAI39 / ExPEC).